Reading from the N-terminus, the 217-residue chain is Protein GrpE (217 aa).

Acidic residues-rich tracts occupy residues 1 to 28, 136 to 152, and 204 to 217; these read MSDD…EGDD, DILD…DPGT, and SEAE…DGDE. 3 disordered regions span residues 1-44, 135-157, and 193-217; these read MSDD…NDPA, DDIL…TDPK, and QVTV…DGDE.

This sequence belongs to the GrpE family. Homodimer.

It is found in the cytoplasm. Participates actively in the response to hyperosmotic and heat shock by preventing the aggregation of stress-denatured proteins, in association with DnaK and GrpE. It is the nucleotide exchange factor for DnaK and may function as a thermosensor. Unfolded proteins bind initially to DnaJ; upon interaction with the DnaJ-bound protein, DnaK hydrolyzes its bound ATP, resulting in the formation of a stable complex. GrpE releases ADP from DnaK; ATP binding to DnaK triggers the release of the substrate protein, thus completing the reaction cycle. Several rounds of ATP-dependent interactions between DnaJ, DnaK and GrpE are required for fully efficient folding. This is Protein GrpE from Natronomonas pharaonis (strain ATCC 35678 / DSM 2160 / CIP 103997 / JCM 8858 / NBRC 14720 / NCIMB 2260 / Gabara) (Halobacterium pharaonis).